A 331-amino-acid chain; its full sequence is L-lactate dehydrogenase A chain (331 aa).

Residues 29 to 57 (GMVGMASAISILLKDLCDELAMVDVMEDK) and R98 contribute to the NAD(+) site. Substrate contacts are provided by R105, N137, and R168. NAD(+) is bound at residue N137. H192 acts as the Proton acceptor in catalysis. T247 serves as a coordination point for substrate.

The protein belongs to the LDH/MDH superfamily. LDH family. As to quaternary structure, homotetramer.

It localises to the cytoplasm. It catalyses the reaction (S)-lactate + NAD(+) = pyruvate + NADH + H(+). The protein operates within fermentation; pyruvate fermentation to lactate; (S)-lactate from pyruvate: step 1/1. Its function is as follows. Interconverts simultaneously and stereospecifically pyruvate and lactate with concomitant interconversion of NADH and NAD(+). The chain is L-lactate dehydrogenase A chain (ldha) from Notothenia angustata (Rockcod).